The primary structure comprises 516 residues: GMP synthase [glutamine-hydrolyzing] (516 aa).

The Glutamine amidotransferase type-1 domain occupies 5–199 (PIVILDFGSQ…ARKICGITSK (195 aa)). The active-site Nucleophile is C82. Catalysis depends on residues H173 and E175. One can recognise a GMPS ATP-PPase domain in the interval 200-391 (WDMGHFAKEQ…LGLPREMVYR (192 aa)). Position 227 to 233 (227 to 233 (SGGVDSS)) interacts with ATP.

Homodimer.

The catalysed reaction is XMP + L-glutamine + ATP + H2O = GMP + L-glutamate + AMP + diphosphate + 2 H(+). It functions in the pathway purine metabolism; GMP biosynthesis; GMP from XMP (L-Gln route): step 1/1. Catalyzes the synthesis of GMP from XMP. The polypeptide is GMP synthase [glutamine-hydrolyzing] (Nitratiruptor sp. (strain SB155-2)).